The chain runs to 171 residues: MKYGVVLFPSKKLQDIANSYRKRYDPNYALIPPHLTLRTPFELTDLEAAEVVSTLREYAKNASPITLRIKKFSSFAPVNNVIYMKVEPNEEIMALNERLYADPLEGTPEYAFVPHVTVAQKLSDDEHSDVLGTLKLRKIDHEETVDRFHLLYQLENGSWTVYETFILGEEG.

The Proton donor role is filled by histidine 34. 2 short sequence motifs (HXTX) span residues 34-37 (HLTL) and 115-118 (HVTV). Histidine 115 serves as the catalytic Proton acceptor.

This sequence belongs to the 2H phosphoesterase superfamily. YjcG family.

This chain is Putative phosphoesterase BPUM_1117, found in Bacillus pumilus (strain SAFR-032).